The following is a 438-amino-acid chain: Glutamyl-tRNA reductase (438 aa).

Residues 49-52, Ser-109, 114-116, and Gln-120 each bind substrate; these read TCNR and EQQ. The active-site Nucleophile is Cys-50. 191 to 196 is an NADP(+) binding site; that stretch reads GAGAMA.

The protein belongs to the glutamyl-tRNA reductase family. As to quaternary structure, homodimer.

The enzyme catalyses (S)-4-amino-5-oxopentanoate + tRNA(Glu) + NADP(+) = L-glutamyl-tRNA(Glu) + NADPH + H(+). It participates in porphyrin-containing compound metabolism; protoporphyrin-IX biosynthesis; 5-aminolevulinate from L-glutamyl-tRNA(Glu): step 1/2. Catalyzes the NADPH-dependent reduction of glutamyl-tRNA(Glu) to glutamate 1-semialdehyde (GSA). This chain is Glutamyl-tRNA reductase, found in Corynebacterium diphtheriae (strain ATCC 700971 / NCTC 13129 / Biotype gravis).